Reading from the N-terminus, the 149-residue chain is Large ribosomal subunit protein uL24 (149 aa).

The segment at 114 to 149 (RKIIERSGGTPEVEAVPEKSEEEKEEKEKEEEKSEE) is disordered. Positions 129–149 (VPEKSEEEKEEKEKEEEKSEE) are enriched in basic and acidic residues.

The protein belongs to the universal ribosomal protein uL24 family. As to quaternary structure, part of the 50S ribosomal subunit.

One of two assembly initiator proteins, it binds directly to the 5'-end of the 23S rRNA, where it nucleates assembly of the 50S subunit. Its function is as follows. Located at the polypeptide exit tunnel on the outside of the subunit. This is Large ribosomal subunit protein uL24 from Methanopyrus kandleri (strain AV19 / DSM 6324 / JCM 9639 / NBRC 100938).